Here is a 282-residue protein sequence, read N- to C-terminus: Phosphate import ATP-binding protein PstB (282 aa).

The disordered stretch occupies residues 1–33 (MNMAETQLNPIARPTAPAGFDPAQSGQSQAPSR). In terms of domain architecture, ABC transporter spans 36 to 277 (IEINDLNFFY…PVRKETEDYI (242 aa)). 68-75 (GPSGCGKS) contributes to the ATP binding site.

The protein belongs to the ABC transporter superfamily. Phosphate importer (TC 3.A.1.7) family. The complex is composed of two ATP-binding proteins (PstB), two transmembrane proteins (PstC and PstA) and a solute-binding protein (PstS).

The protein localises to the cell inner membrane. The catalysed reaction is phosphate(out) + ATP + H2O = ADP + 2 phosphate(in) + H(+). Part of the ABC transporter complex PstSACB involved in phosphate import. Responsible for energy coupling to the transport system. This Paraburkholderia xenovorans (strain LB400) protein is Phosphate import ATP-binding protein PstB.